The chain runs to 192 residues: Large ribosomal subunit protein bL9 (192 aa).

Positions 172–192 (DALRPEDFFDPEADGVDEDEA) are disordered. Over residues 179–192 (FFDPEADGVDEDEA) the composition is skewed to acidic residues.

Belongs to the bacterial ribosomal protein bL9 family.

In terms of biological role, binds to the 23S rRNA. The chain is Large ribosomal subunit protein bL9 from Rhizobium leguminosarum bv. trifolii (strain WSM2304).